Reading from the N-terminus, the 260-residue chain is Aliphatic sulfonates import ATP-binding protein SsuB 1 (260 aa).

An ABC transporter domain is found at 29-243 (VRVDGLTRSF…DITDPRFAEL (215 aa)). Residue 61–68 (GRSGCGKS) participates in ATP binding.

Belongs to the ABC transporter superfamily. Aliphatic sulfonates importer (TC 3.A.1.17.2) family. In terms of assembly, the complex is composed of two ATP-binding proteins (SsuB), two transmembrane proteins (SsuC) and a solute-binding protein (SsuA).

It is found in the cell membrane. The enzyme catalyses ATP + H2O + aliphatic sulfonate-[sulfonate-binding protein]Side 1 = ADP + phosphate + aliphatic sulfonateSide 2 + [sulfonate-binding protein]Side 1.. In terms of biological role, part of the ABC transporter complex SsuABC involved in aliphatic sulfonates import. Responsible for energy coupling to the transport system. The sequence is that of Aliphatic sulfonates import ATP-binding protein SsuB 1 from Streptomyces avermitilis (strain ATCC 31267 / DSM 46492 / JCM 5070 / NBRC 14893 / NCIMB 12804 / NRRL 8165 / MA-4680).